The chain runs to 140 residues: Large ribosomal subunit protein uL11 (140 aa).

This sequence belongs to the universal ribosomal protein uL11 family. In terms of assembly, part of the ribosomal stalk of the 50S ribosomal subunit. Interacts with L10 and the large rRNA to form the base of the stalk. L10 forms an elongated spine to which L12 dimers bind in a sequential fashion forming a multimeric L10(L12)X complex. Post-translationally, one or more lysine residues are methylated.

Forms part of the ribosomal stalk which helps the ribosome interact with GTP-bound translation factors. In Syntrophotalea carbinolica (strain DSM 2380 / NBRC 103641 / GraBd1) (Pelobacter carbinolicus), this protein is Large ribosomal subunit protein uL11.